The sequence spans 209 residues: Ribosomal RNA large subunit methyltransferase E (209 aa).

5 residues coordinate S-adenosyl-L-methionine: Gly60, Trp62, Asp80, Asp96, and Asp121. The active-site Proton acceptor is Lys161. Residues 182-196 (VQMRKPSSSRDRSRE) show a composition bias toward basic and acidic residues. Positions 182–209 (VQMRKPSSSRDRSREQYLLGRGFRGRSE) are disordered.

It belongs to the class I-like SAM-binding methyltransferase superfamily. RNA methyltransferase RlmE family.

Its subcellular location is the cytoplasm. It carries out the reaction uridine(2552) in 23S rRNA + S-adenosyl-L-methionine = 2'-O-methyluridine(2552) in 23S rRNA + S-adenosyl-L-homocysteine + H(+). Its function is as follows. Specifically methylates the uridine in position 2552 of 23S rRNA at the 2'-O position of the ribose in the fully assembled 50S ribosomal subunit. The sequence is that of Ribosomal RNA large subunit methyltransferase E from Pseudomonas fluorescens (strain ATCC BAA-477 / NRRL B-23932 / Pf-5).